Here is a 397-residue protein sequence, read N- to C-terminus: MNIHEYQAKALLKGYGAPVAEGVAILKVEEAAAAAKSLPGPLYVVKSQIHAGGRGKGKFKELSPEAKGGVRLAKSIEEVVAHAKEMLGNTLVTAQTGDAGKQVNRLYIEDGADIARELYCSILVDRSVGRVAFVVSTEGGMDIEAVAHDTPEKIQTIAIDPEAGVTAADVAAISKALQLDGAAAEDAKSLFPALYKAFNEKDMALLEVNPLIVMKDGHLRVLDAKMSFDGNALFRHDDVKTLRDETEEDAKEIEASKWDLAYVALDGNIGCMVNGAGLAMATMDIIKLYGKEPANFCDVGGGAGKEKVAAAFKIITADPKVEGILVNIFGGIMKCDVIAEGVIAAVKEVGLKVPLVVRLEGTNVELGKKILNESGLAITAADDLDDAAKKIVAAING.

The 246-residue stretch at 9 to 254 (KALLKGYGAP…ETEEDAKEIE (246 aa)) folds into the ATP-grasp domain. Residues Lys46, 53-55 (GRG), Glu109, Ala112, and Glu117 contribute to the ATP site. 2 residues coordinate Mg(2+): Asn209 and Asp223. Substrate is bound by residues Asn274 and 331–333 (GIM).

This sequence belongs to the succinate/malate CoA ligase beta subunit family. As to quaternary structure, heterotetramer of two alpha and two beta subunits. It depends on Mg(2+) as a cofactor.

The enzyme catalyses succinate + ATP + CoA = succinyl-CoA + ADP + phosphate. The catalysed reaction is GTP + succinate + CoA = succinyl-CoA + GDP + phosphate. The protein operates within carbohydrate metabolism; tricarboxylic acid cycle; succinate from succinyl-CoA (ligase route): step 1/1. In terms of biological role, succinyl-CoA synthetase functions in the citric acid cycle (TCA), coupling the hydrolysis of succinyl-CoA to the synthesis of either ATP or GTP and thus represents the only step of substrate-level phosphorylation in the TCA. The beta subunit provides nucleotide specificity of the enzyme and binds the substrate succinate, while the binding sites for coenzyme A and phosphate are found in the alpha subunit. The protein is Succinate--CoA ligase [ADP-forming] subunit beta of Rhizobium leguminosarum bv. trifolii (strain WSM2304).